Here is an 803-residue protein sequence, read N- to C-terminus: H(+)/Cl(-) exchange transporter 7 (803 aa).

Residues 1–46 (MANVSKKVSWSGRDRDDEEGAPLLRRTGQPDEETPLLNGAGPGARQ) form a disordered region. The Cytoplasmic segment spans residues 1–124 (MANVSKKVSW…TAFRTVEIKR (124 aa)). A Phosphoserine modification is found at Ser9. The next 2 helical transmembrane spans lie at 125 to 157 (WVICALIGILTGLVACFIDIVVENLAGLKYRVI) and 172 to 195 (FSLLLWATLNSAFVLVGSVIVAFI). The short motif at 201–205 (GSGIP) is the Selectivity filter part_1 element. Chloride is bound at residue Ser202. The helical intramembrane region spans 204–211 (IPQIKCFL). The next 2 membrane-spanning stretches (helical) occupy residues 221 to 239 (RLKTLVIKVSGVILSVVGG) and 245 to 262 (EGPMIHSGSVIAAGISQG). Positions 243–247 (GKEGP) match the Selectivity filter part_2 motif. Intramembrane regions (helical) lie at residues 286-298 (FVSAGAAAGVSAA) and 302-310 (PVGGVLFSL). 5 consecutive transmembrane segments (helical) span residues 320–339 (FLTWRIFFASMISTFTLNFV), 373–403 (IPVFIAMGVVGGILGAVFNALNYWLTMFRIR), 408–430 (PCLQVIEAMLVAAVTATVAFVLI), 485–505 (PMTLGLFTLVYFFLACWTYGL), and 510–533 (GVFIPSLLIGAAWGRLFGISMSYL). Positions 510-514 (GVFIP) match the Selectivity filter part_3 motif. Phe512 provides a ligand contact to chloride. The helical intramembrane region spans 543–557 (GKYALMGAAAQLGGI). An intramembrane region (note=Loop between two helices) is located at residues 558 to 560 (VRM). The helical intramembrane region spans 561–572 (TLSLTVIMMEAT). An intramembrane region (note=Loop between two helices) is located at residues 573 to 576 (SNVT). A helical membrane pass occupies residues 577–595 (YGFPIMLVLMTAKIVGDVF). The Cytoplasmic segment spans residues 596–803 (IEGLYDMHIQ…GLEELSLAQT (208 aa)). Tyr600 lines the chloride pocket. CBS domains are found at residues 629–693 (MSTP…VFVE) and 739–797 (MNPS…GLEE). Residues 656–658 (HNG) and 781–784 (TRKD) contribute to the ATP site. Ser799 bears the Phosphoserine mark.

It belongs to the chloride channel (TC 2.A.49) family. ClC-7/CLCN7 subfamily. In terms of assembly, chloride channel 7 are heteromers of alpha (CLCN7) and beta (OSTM1) subunits. Brain, testis, muscle and kidney.

It localises to the lysosome membrane. The catalysed reaction is 2 chloride(in) + H(+)(out) = 2 chloride(out) + H(+)(in). In terms of biological role, slowly voltage-gated channel mediating the exchange of chloride ions against protons. Functions as antiporter and contributes to the acidification of the lysosome lumen and may be involved in maintaining lysosomal pH. The CLC channel family contains both chloride channels and proton-coupled anion transporters that exchange chloride or another anion for protons. The presence of conserved gating glutamate residues is typical for family members that function as antiporters. The sequence is that of H(+)/Cl(-) exchange transporter 7 (Clcn7) from Rattus norvegicus (Rat).